A 970-amino-acid polypeptide reads, in one-letter code: Sodium/calcium exchanger 1 (970 aa).

The signal sequence occupies residues 1–32 (MLRLRLSPTFSVGFHLLAFVPLLFSHVDLISA). Topologically, residues 33 to 71 (DTEMEGEGNETGECTGSYYCKKGVILPIWEPQDPSFGDK) are extracellular. A glycan (N-linked (GlcNAc...) asparagine) is linked at N41. Residues 72–92 (IARATVYFVAMVYMFLGVSII) traverse the membrane as a helical segment. Topologically, residues 93–133 (ADRFMSSIEVITSQEKEITIKKPNGETTKTTVRIWNETVSN) are cytoplasmic. Residues 134–154 (LTLMALGSSAPEILLSVIEVC) form a helical membrane-spanning segment. Residues 138–178 (ALGSSAPEILLSVIEVCGHNFTAGDLGPSTIVGSAAFNMFI) form an Alpha-1 repeat. The Extracellular segment spans residues 155–167 (GHNFTAGDLGPST). N-linked (GlcNAc...) asparagine glycosylation occurs at N157. Residues 168 to 188 (IVGSAAFNMFIIIALCVYVVP) form a helical membrane-spanning segment. Over 189–201 (DGETRKIKHLRVF) the chain is Cytoplasmic. A helical transmembrane segment spans residues 202–222 (FVTAAWSIFAYTWLYIILSVI). The Extracellular segment spans residues 223-228 (SPGVVE). Residues 229–249 (VWEGLLTFFFFPICVVFAWVA) form a helical membrane-spanning segment. The Cytoplasmic segment spans residues 250–797 (DRRLLFYKYV…FVPPTEYWNG (548 aa)). The putative calmodulin-binding region stretch occupies residues 251–270 (RRLLFYKYVYKRYRAGKQRG). Phosphoserine is present on residues S282 and S389. Calx-beta domains follow at residues 393–493 (VNTE…VHLS) and 524–624 (ATVT…LEIG). Residues E417, D453, D478, D479, I481, E483, E486, D530, D531, D532, E548, D584, D610, E611, E612, and E715 each coordinate Ca(2+). Residues 798-818 (WACFIVSILMIGILTAFIGDL) form a helical membrane-spanning segment. The Extracellular segment spans residues 819-821 (ASH). The chain crosses the membrane as a helical span at residues 822–842 (FGCTIGLKDSVTAVVFVALGT). An Alpha-2 repeat occupies 839–875 (ALGTSVPDTFASKVAATQDQYADASIGNVTGSNAVNV). The Cytoplasmic portion of the chain corresponds to 843–871 (SVPDTFASKVAATQDQYADASIGNVTGSN). The chain crosses the membrane as a helical span at residues 872–892 (AVNVFLGIGVAWSIAAIYHAA). The Extracellular segment spans residues 893-903 (NGEQFKVSPGT). A helical transmembrane segment spans residues 904 to 924 (LAFSVTLFTIFAFINVGVLLY). The Cytoplasmic segment spans residues 925-941 (RRRPEIGGELGGPRTAK). A helical transmembrane segment spans residues 942–962 (LLTSCLFVLLWLLYIFFSSLE). Residues 963 to 970 (AYCHIKGF) lie on the Extracellular side of the membrane.

This sequence belongs to the Ca(2+):cation antiporter (CaCA) (TC 2.A.19) family. SLC8 subfamily. In terms of tissue distribution, detected in heart (at protein level). Detected in heart.

The protein localises to the cell membrane. It catalyses the reaction Ca(2+)(in) + 3 Na(+)(out) = Ca(2+)(out) + 3 Na(+)(in). Activated by micromolar levels of Ca(2+). Mediates the exchange of one Ca(2+) ion against three to four Na(+) ions across the cell membrane, and thereby contributes to the regulation of cytoplasmic Ca(2+) levels and Ca(2+)-dependent cellular processes. Contributes to Ca(2+) transport during excitation-contraction coupling in muscle. In a first phase, voltage-gated channels mediate the rapid increase of cytoplasmic Ca(2+) levels due to release of Ca(2+) stores from the endoplasmic reticulum. SLC8A1 mediates the export of Ca(2+) from the cell during the next phase, so that cytoplasmic Ca(2+) levels rapidly return to baseline. Required for normal embryonic heart development and the onset of heart contractions. The protein is Sodium/calcium exchanger 1 (SLC8A1) of Felis catus (Cat).